We begin with the raw amino-acid sequence, 339 residues long: Dihydroorotate dehydrogenase (quinone) (339 aa).

Residues 62 to 66 and Thr-86 each bind FMN; that span reads AGMDK. Lys-66 is a binding site for substrate. 111–115 contributes to the substrate binding site; it reads NRMGF. Asn-139 and Asn-172 together coordinate FMN. A substrate-binding site is contributed by Asn-172. Ser-175 acts as the Nucleophile in catalysis. Residue Asn-177 coordinates substrate. FMN is bound by residues Lys-217 and Thr-245. 246-247 contributes to the substrate binding site; that stretch reads NT. FMN-binding positions include Gly-268, Gly-297, and 318–319; that span reads YS.

The protein belongs to the dihydroorotate dehydrogenase family. Type 2 subfamily. Monomer. It depends on FMN as a cofactor.

Its subcellular location is the cell membrane. The catalysed reaction is (S)-dihydroorotate + a quinone = orotate + a quinol. It functions in the pathway pyrimidine metabolism; UMP biosynthesis via de novo pathway; orotate from (S)-dihydroorotate (quinone route): step 1/1. In terms of biological role, catalyzes the conversion of dihydroorotate to orotate with quinone as electron acceptor. The chain is Dihydroorotate dehydrogenase (quinone) from Shewanella putrefaciens (strain CN-32 / ATCC BAA-453).